Consider the following 530-residue polypeptide: Phosphoenolpyruvate carboxykinase (ATP) (530 aa).

The substrate site is built by R58, Y195, and K201. ATP contacts are provided by residues K201, H220, and 236–244 (GLSGTGKTT). K201 and H220 together coordinate Mn(2+). D257 is a Mn(2+) binding site. Residues E285, R321, 440 to 441 (RI), and T446 each bind ATP. R321 contributes to the substrate binding site.

It belongs to the phosphoenolpyruvate carboxykinase (ATP) family. Requires Mn(2+) as cofactor.

The protein resides in the cytoplasm. It carries out the reaction oxaloacetate + ATP = phosphoenolpyruvate + ADP + CO2. The protein operates within carbohydrate biosynthesis; gluconeogenesis. Involved in the gluconeogenesis. Catalyzes the conversion of oxaloacetate (OAA) to phosphoenolpyruvate (PEP) through direct phosphoryl transfer between the nucleoside triphosphate and OAA. The sequence is that of Phosphoenolpyruvate carboxykinase (ATP) from Staphylococcus aureus (strain bovine RF122 / ET3-1).